Reading from the N-terminus, the 3387-residue chain is MNQRKKVVRPPFNMLKRERNRVSTPQGLVKRFSTGLFSGKGPLRMVLAFITFLRVLSIPPTAGILKRWGQLKKNKAIKILIGFRKEIGRMLNILNGRKRSTITLLCLIPTVMAFSLSTRDGEPLMIVAKHERGRPLLFKTTEGINKCTLIAMDLGEMCEDTVTYKCPLLVNTEPEDIDCWCNLTSTWVMYGTCTQSGERRREKRSVALTPHSGMGLETRAETWMSSEGAWKHAQRVESWILRNPGFALLAGFMAYMIGQTGIQRTVFFVLMMLVAPSYGMRCVGVGNRDFVEGVSGGAWVDLVLEHGGCVTTMAQGKPTLDFELTKTTAKEVALLRTYCIEASISNITTATRCPTQGEPYLKEEQDQQYICRRDVVDRGWGNGCGLFGKGGVVTCAKFSCSGKITGNLVQIENLEYTVVVTVHNGDTHAVGNDTSNHGVTAMITPRSPSVEVKLPDYGELTLDCEPRSGIDFNEMILMKMKKKTWLVHKQWFLDLPLPWTAGADTSEVHWNYKERMVTFKVPHAKRQDVTVLGSQEGAMHSALAGATEVDSGDGNHMFAGHLKCKVRMEKLRIKGMSYTMCSGKFSIDKEMAETQHGTTVVKVKYEGAGAPCKVPIEIRDVNKEKVVGRIISSTPLAENTNSVTNIELEPPFGDSYIVIGVGNSALTLHWFRKGSSIGKMFESTYRGAKRMAILGETAWDFGSVGGLFTSLGKAVHQVFGSVYTTMFGGVSWMIRILIGFLVLWIGTNSRNTSMAMTCIAVGGITLFLGFTVQADMGCVASWSGKELKCGSGIFVVDNVHTWTEQYKFQPESPARLASAILNAHKDGVCGIRSTTRLENVMWKQITNELNYVLWEGGHDLTVVAGDVKGVLTKGKRALTPPVSDLKYSWKTWGKAKIFTPEARNSTFLIDGPDTSECPNERRAWNSLEVEDYGFGMFTTNIWMKFREGSSEVCDHRLMSAAIKDQKAVHADMGYWIESSKNQTWQIEKASLIEVKTCLWPKTHTLWSNGVLESQMLIPKSYAGPFSQHNYRQGYATQTVGPWHLGKLEIDFGECPGTTVTIQEDCDHRGPSLRTTTASGKLVTQWCCRSCTMPPLRFLGEDGCWYGMEIRPLSEKEENMVKSQVTAGQGTSETFSMGLLCLTLFVEECLRRRVTRKHMILVVVITLCAIILGGLTWMDLLRALIMLGDTMSGRIGGQIHLAIMAVFKMSPGYVLGVFLRKLTSRETALMVIGMAMTTVLSIPHDLMELIDGISLGLILLKIVTQFDNTQVGTLALSLTFIRSTMPLVMAWRTIMAVLFVVTLIPLCRTSCLQKQSHWVEITALILGAQALPVYLMTLMKGASRRSWPLNEGIMAVGLVSLLGSALLKNDVPLAGPMVAGGLLLAAYVMSGSSADLSLEKAANVQWDEMADITGSSPIIEVKQDEDGSFSIRDVEETNMITLLVKLALITVSGLYPLAIPVTMTLWYMWQVKTQRSGALWDVPSPAATKKAALSEGVYRIMQRGLFGKTQVGVGIHMEGVFHTMWHVTRGSVICHETGRLEPSWADVRNDMISYGGGWRLGDKWDKEEDVQVLAIEPGKNPKHVQTKPGLFKTLTGEIGAVTLDFKPGTSGSPIINRKGKVIGLYGNGVVTKSGDYVSAITQAERIGEPDYEVDEDIFRKKRLTIMDLHPGAGKTKRILPSIVREALKRRLRTLILAPTRVVAAEMEEALRGLPIRYQTPAVKSEHTGREIVDLMCHATFTTRLLSSTRVPNYNLIVMDEAHFTDPSSVAARGYISTRVEMGEAAAIFMTATPPGATDPFPQSNSPIEDIEREIPERSWNTGFDWITDYQGKTVWFVPSIKAGNDIANCLRKSGKKVIQLSRKTFDTEYPKTKLTDWDFVVTTDISEMGANFRAGRVIDPRRCLKPVILPDGPERVILAGPIPVTPASAAQRRGRIGRNPAQEDDQYVFSGDPLKNDEDHAHWTEAKMLLDNIYTPEGIIPTLFGPEREKTQAIDGEFRLRGEQRKTFVELMRRGDLPVWLSYKVASAGISYKDREWCFTGERNNQILEENMEVEIWTREGEKKKLRPRWLDARVYADPMALKDFKEFASGRKSITLDILTEIASLPTYLSSRAKLALDNIVMLHTTERGGRAYQHALNELPESLETLMLVALLGAMTAGIFLFFMQGKGIGKLSMGLITIAVASGLLWVAEIQPQWIAASIILEFFLMVLLIPEPEKQRTPQDNQLIYVILTILTIIGLIAANEMGLIEKTKTDFGFYQVKTETTILDVDLRPASAWTLYAVATTILTPMLRHTIENTSANLSLAAIANQAAVLMGLGKGWPLHRMDLGVPLLAMGCYSQVNPTTLTASLVMLLVHYAIIGPGLQAKATREAQKRTAAGIMKNPTVDGITVIDLEPISYDPKFEKQLGQVMLLVLCAGQLLLMRTTWAFCEVLTLATGPILTLWEGNPGRFWNTTIAVSTANIFRGSYLAGAGLAFSLIKNAQTPRRGTGTTGETLGEKWKRQLNSLDRKEFEEYKRSGILEVDRTEAKSALKDGSKIKHAVSRGSSKIRWIVERGMVKPKGKVVDLGCGRGGWSYYMATLKNVTEVKGYTKGGPGHEEPIPMATYGWNLVKLHSGVDVFYKPTEQVDTLLCDIGESSSNPTIEEGRTLRVLKMVEPWLSSKPEFCIKVLNPYMPTVIEELEKLQRKHGGNLVRCPLSRNSTHEMYWVSGASGNIVSSVNTTSKMLLNRFTTRHRKPTYEKDVDLGAGTRSVSTETEKPDMTIIGRRLQRLQEEHKETWHYDQENPYRTWAYHGSYEAPSTGSASSMVNGVVKLLTKPWDVIPMVTQLAMTDTTPFGQQRVFKEKVDTRTPQPKPGTRMVMTTTANWLWALLGKKKNPRLCTREEFISKVRSNAAIGAVFQEEQGWTSASEAVNDSRFWELVDKERALHQEGKCESCVYNMMGKREKKLGEFGRAKGSRAIWYMWLGARFLEFEALGFLNEDHWFGRENSWSGVEGEGLHRLGYILEEIDKKDGDLMYADDTAGWDTRITEDDLQNEELITEQMAPHHKILAKAIFKLTYQNKVVKVLRPTPRGAVMDIISRKDQRGSGQVGTYGLNTFTNMEVQLIRQMEAEGVITQDDMQNPKGLKERVEKWLKECGVDRLKRMAISGDDCVVKPLDERFGTSLLFLNDMGKVRKDIPQWEPSKGWKNWQEVPFCSHHFHKIFMKDGRSLVVPCRNQDELIGRARISQGAGWSLRETACLGKAYAQMWSLMYFHRRDLRLASMAICSAVPTEWFPTSRTTWSIHAHHQWMTTEDMLKVWNRVWIEDNPNMTDKTPVHSWEDIPYLGKREDLWCGSLIGLSSRATWAKNIHTAITQVRNLIGKEEYVDYMPVMKRYSAPSESEGVL.

Topologically, residues 1–100 are cytoplasmic; sequence MNQRKKVVRP…LNILNGRKRS (100 aa). The hydrophobic; homodimerization of capsid protein C stretch occupies residues 36-71; it reads LFSGKGPLRMVLAFITFLRVLSIPPTAGILKRWGQL. The propeptide at 100 to 113 is ER anchor for the capsid protein C, removed in mature form by serine protease NS3; that stretch reads STITLLCLIPTVMA. Residues 101–117 form a helical membrane-spanning segment; it reads TITLLCLIPTVMAFSLS. At 118–237 the chain is on the extracellular side; that stretch reads TRDGEPLMIV…GAWKHAQRVE (120 aa). The N-linked (GlcNAc...) asparagine; by host glycan is linked to N182. Residues 238-258 form a helical membrane-spanning segment; it reads SWILRNPGFALLAGFMAYMIG. Topologically, residues 259–265 are cytoplasmic; that stretch reads QTGIQRT. Residues 266 to 279 form a helical membrane-spanning segment; sequence VFFVLMMLVAPSYG. Residues 280 to 725 lie on the Extracellular side of the membrane; sequence MRCVGVGNRD…HQVFGSVYTT (446 aa). Disulfide bonds link C282-C309, C339-C400, C353-C384, and C371-C395. An N-linked (GlcNAc...) asparagine; by host glycan is attached at N346. A fusion peptide region spans residues 377 to 390; the sequence is DRGWGNGCGLFGKG. N432 carries N-linked (GlcNAc...) asparagine; by host glycosylation. Intrachain disulfides connect C464/C564 and C581/C612. Residues 726–746 form a helical membrane-spanning segment; sequence MFGGVSWMIRILIGFLVLWIG. Residues 747–751 are Cytoplasmic-facing; it reads TNSRN. The helical transmembrane segment at 752–772 threads the bilayer; the sequence is TSMAMTCIAVGGITLFLGFTV. Topologically, residues 773-1194 are extracellular; that stretch reads QADMGCVASW…MLGDTMSGRI (422 aa). 6 disulfide bridges follow: C778–C789, C829–C917, C953–C997, C1054–C1103, C1065–C1087, and C1086–C1090. N-linked (GlcNAc...) asparagine; by host glycosylation is found at N904 and N981. Residues 1195–1218 form a helical membrane-spanning segment; the sequence is GGQIHLAIMAVFKMSPGYVLGVFL. At 1219 to 1224 the chain is on the lumenal side; the sequence is RKLTSR. Residues 1225 to 1243 form a helical membrane-spanning segment; the sequence is ETALMVIGMAMTTVLSIPH. The Cytoplasmic portion of the chain corresponds to 1244 to 1267; it reads DLMELIDGISLGLILLKIVTQFDN. Residues 1268-1288 traverse the membrane as a helical segment; the sequence is TQVGTLALSLTFIRSTMPLVM. A1289 is a topological domain (lumenal). The helical transmembrane segment at 1290 to 1308 threads the bilayer; that stretch reads WRTIMAVLFVVTLIPLCRT. Over 1309–1316 the chain is Lumenal; sequence SCLQKQSH. The chain crosses the membrane as a helical span at residues 1317 to 1337; that stretch reads WVEITALILGAQALPVYLMTL. Residues 1338–1345 are Cytoplasmic-facing; the sequence is MKGASRRS. Residues 1346 to 1366 form a helical membrane-spanning segment; sequence WPLNEGIMAVGLVSLLGSALL. The Lumenal portion of the chain corresponds to 1367–1369; sequence KND. The chain crosses the membrane as a helical span at residues 1370-1390; that stretch reads VPLAGPMVAGGLLLAAYVMSG. The Cytoplasmic portion of the chain corresponds to 1391–1437; the sequence is SSADLSLEKAANVQWDEMADITGSSPIIEVKQDEDGSFSIRDVEETN. The segment at 1397 to 1436 is interacts with and activates NS3 protease; it reads LEKAANVQWDEMADITGSSPIIEVKQDEDGSFSIRDVEET. Positions 1438–1458 form an intramembrane region, helical; the sequence is MITLLVKLALITVSGLYPLAI. Over 1459–2143 the chain is Cytoplasmic; that stretch reads PVTMTLWYMW…QHALNELPES (685 aa). Positions 1475–1652 constitute a Peptidase S7 domain; the sequence is SGALWDVPSP…ERIGEPDYEV (178 aa). Active-site charge relay system; for serine protease NS3 activity residues include H1525, D1549, and S1609. A Helicase ATP-binding domain is found at 1654–1810; that stretch reads EDIFRKKRLT…QSNSPIEDIE (157 aa). The interval 1658 to 1661 is important for RNA-binding; the sequence is RKKR. 1667 to 1674 serves as a coordination point for ATP; that stretch reads LHPGAGKT. The DEAH box motif lies at 1758–1761; sequence DEAH. In terms of domain architecture, Helicase C-terminal spans 1820-1987; it reads TGFDWITDYQ…IIPTLFGPER (168 aa). K1862 bears the N6-acetyllysine; by host mark. The helical transmembrane segment at 2144–2164 threads the bilayer; the sequence is LETLMLVALLGAMTAGIFLFF. Residues 2165–2169 are Lumenal-facing; the sequence is MQGKG. An intramembrane region (helical) is located at residues 2170 to 2190; the sequence is IGKLSMGLITIAVASGLLWVA. Residue E2191 is a topological domain, lumenal. Residues 2192-2212 form a helical membrane-spanning segment; it reads IQPQWIAASIILEFFLMVLLI. The Cytoplasmic portion of the chain corresponds to 2213 to 2225; that stretch reads PEPEKQRTPQDNQ. Residues 2226 to 2246 form a helical membrane-spanning segment; that stretch reads LIYVILTILTIIGLIAANEMG. The Lumenal portion of the chain corresponds to 2247–2270; the sequence is LIEKTKTDFGFYQVKTETTILDVD. The helical intramembrane region spans 2271-2291; the sequence is LRPASAWTLYAVATTILTPML. The Lumenal portion of the chain corresponds to 2292–2301; the sequence is RHTIENTSAN. N-linked (GlcNAc...) asparagine; by host glycans are attached at residues N2297 and N2301. The helical intramembrane region spans 2302–2322; sequence LSLAAIANQAAVLMGLGKGWP. Residues 2323–2343 are Lumenal-facing; it reads LHRMDLGVPLLAMGCYSQVNP. The helical transmembrane segment at 2344–2364 threads the bilayer; that stretch reads TTLTASLVMLLVHYAIIGPGL. Residues 2365 to 2409 are Cytoplasmic-facing; that stretch reads QAKATREAQKRTAAGIMKNPTVDGITVIDLEPISYDPKFEKQLGQ. A helical membrane pass occupies residues 2410-2430; sequence VMLLVLCAGQLLLMRTTWAFC. The Lumenal portion of the chain corresponds to 2431–2455; sequence EVLTLATGPILTLWEGNPGRFWNTT. N-linked (GlcNAc...) asparagine; by host glycosylation occurs at N2453. Residues 2456–2476 traverse the membrane as a helical segment; the sequence is IAVSTANIFRGSYLAGAGLAF. The Cytoplasmic portion of the chain corresponds to 2477-3387; it reads SLIKNAQTPR…SAPSESEGVL (911 aa). In terms of domain architecture, mRNA cap 0-1 NS5-type MT spans 2489–2751; that stretch reads TGTTGETLGE…DVDLGAGTRS (263 aa). S-adenosyl-L-methionine is bound at residue S2543. At S2543 the chain carries Phosphoserine. K2548 (for 2'-O-MTase activity) is an active-site residue. Positions 2564–2567 match the SUMO-interacting motif motif; that stretch reads VVDL. S-adenosyl-L-methionine is bound by residues G2573, W2574, T2591, K2592, D2618, and V2619. The active-site For 2'-O-MTase activity is the D2633. Residue I2634 participates in S-adenosyl-L-methionine binding. Active-site for 2'-O-MTase activity residues include K2668 and E2704. Residue Y2706 participates in S-adenosyl-L-methionine binding. Zn(2+) contacts are provided by E2925, H2929, C2934, and C2937. In terms of domain architecture, RdRp catalytic spans 3016-3166; it reads LMYADDTAGW…PLDERFGTSL (151 aa). Residues H3200, C3216, and C3335 each contribute to the Zn(2+) site.

The protein in the N-terminal section; belongs to the class I-like SAM-binding methyltransferase superfamily. mRNA cap 0-1 NS5-type methyltransferase family. Homodimer. Interacts (via N-terminus) with host EXOC1 (via C-terminus); this interaction results in EXOC1 degradation through the proteasome degradation pathway. As to quaternary structure, forms heterodimers with envelope protein E in the endoplasmic reticulum and Golgi. In terms of assembly, homodimer; in the endoplasmic reticulum and Golgi. Interacts with protein prM. Interacts with non-structural protein 1. Homodimer; Homohexamer when secreted. Interacts with envelope protein E. As to quaternary structure, interacts (via N-terminus) with serine protease NS3. In terms of assembly, forms a heterodimer with serine protease NS3. May form homooligomers. Forms a heterodimer with NS2B. Interacts with NS4B. Interacts with unphosphorylated RNA-directed RNA polymerase NS5; this interaction stimulates RNA-directed RNA polymerase NS5 guanylyltransferase activity. Interacts with host SHFL. As to quaternary structure, interacts with host MAVS; this interaction inhibits the synthesis of IFN-beta. Interacts with host SHFL. Interacts with host AUP1; the interaction occurs in the presence of Dengue virus NS4B and induces lipophagy which facilitates production of virus progeny particles. In terms of assembly, interacts with serine protease NS3. Homodimer. Interacts with host STAT2; this interaction inhibits the phosphorylation of the latter, and, when all viral proteins are present (polyprotein), targets STAT2 for degradation. Interacts with serine protease NS3. Interacts with host PAF1 complex; the interaction may prevent the recruitment of the PAF1 complex to interferon-responsive genes, and thus reduces the immune response. Specific enzymatic cleavages in vivo yield mature proteins. Cleavages in the lumen of endoplasmic reticulum are performed by host signal peptidase, whereas cleavages in the cytoplasmic side are performed by serine protease NS3. Signal cleavage at the 2K-4B site requires a prior NS3 protease-mediated cleavage at the 4A-2K site. Post-translationally, cleaved in post-Golgi vesicles by a host furin, releasing the mature small envelope protein M, and peptide pr. This cleavage is incomplete as up to 30% of viral particles still carry uncleaved prM. In terms of processing, N-glycosylated. N-glycosylated. The excreted form is glycosylated and this is required for efficient secretion of the protein from infected cells. Post-translationally, acetylated by host KAT5. Acetylation modulates NS3 RNA-binding and unwinding activities and plays an important positive role for viral replication. In terms of processing, sumoylation of RNA-directed RNA polymerase NS5 increases NS5 protein stability allowing proper viral RNA replication. Phosphorylated on serines residues. This phosphorylation may trigger NS5 nuclear localization.

The protein resides in the virion. It localises to the host nucleus. It is found in the host cytoplasm. The protein localises to the host perinuclear region. Its subcellular location is the secreted. The protein resides in the virion membrane. It localises to the host endoplasmic reticulum membrane. It is found in the host mitochondrion. It carries out the reaction Selective hydrolysis of -Xaa-Xaa-|-Yaa- bonds in which each of the Xaa can be either Arg or Lys and Yaa can be either Ser or Ala.. The enzyme catalyses RNA(n) + a ribonucleoside 5'-triphosphate = RNA(n+1) + diphosphate. It catalyses the reaction a ribonucleoside 5'-triphosphate + H2O = a ribonucleoside 5'-diphosphate + phosphate + H(+). The catalysed reaction is ATP + H2O = ADP + phosphate + H(+). It carries out the reaction a 5'-end (5'-triphosphoguanosine)-ribonucleoside in mRNA + S-adenosyl-L-methionine = a 5'-end (N(7)-methyl 5'-triphosphoguanosine)-ribonucleoside in mRNA + S-adenosyl-L-homocysteine. The enzyme catalyses a 5'-end (N(7)-methyl 5'-triphosphoguanosine)-ribonucleoside in mRNA + S-adenosyl-L-methionine = a 5'-end (N(7)-methyl 5'-triphosphoguanosine)-(2'-O-methyl-ribonucleoside) in mRNA + S-adenosyl-L-homocysteine + H(+). Its function is as follows. Plays a role in virus budding by binding to the cell membrane and gathering the viral RNA into a nucleocapsid that forms the core of a mature virus particle. During virus entry, may induce genome penetration into the host cytoplasm after hemifusion induced by the surface proteins. Can migrate to the cell nucleus where it modulates host functions. Overcomes the anti-viral effects of host EXOC1 by sequestering and degrading the latter through the proteasome degradation pathway. Regulates the ATPase activity of the NS3 helicase activity. NS4A allows NS3 helicase to conserve energy during unwinding. Plays a role in the inhibition of the host innate immune response. Interacts with host MAVS and thereby prevents the interaction between RIGI and MAVS. In turn, IFN-beta production is impaired. Interacts with host AUP1 which mediates induction of lipophagy in host cells and facilitates production of virus progeny particles. In terms of biological role, inhibits RNA silencing by interfering with host Dicer. Functionally, prevents premature fusion activity of envelope proteins in trans-Golgi by binding to envelope protein E at pH6.0. After virion release in extracellular space, gets dissociated from E dimers. Its function is as follows. Acts as a chaperone for envelope protein E during intracellular virion assembly by masking and inactivating envelope protein E fusion peptide. prM is the only viral peptide matured by host furin in the trans-Golgi network probably to avoid catastrophic activation of the viral fusion activity in acidic Golgi compartment prior to virion release. prM-E cleavage is inefficient, and many virions are only partially matured. These uncleaved prM would play a role in immune evasion. May play a role in virus budding. Exerts cytotoxic effects by activating a mitochondrial apoptotic pathway through M ectodomain. May display a viroporin activity. In terms of biological role, binds to host cell surface receptor and mediates fusion between viral and cellular membranes. Envelope protein is synthesized in the endoplasmic reticulum in the form of heterodimer with protein prM. They play a role in virion budding in the ER, and the newly formed immature particle is covered with 60 spikes composed of heterodimer between precursor prM and envelope protein E. The virion is transported to the Golgi apparatus where the low pH causes dissociation of PrM-E heterodimers and formation of E homodimers. prM-E cleavage is inefficient, and many virions are only partially matured. These uncleaved prM would play a role in immune evasion. Functionally, involved in immune evasion, pathogenesis and viral replication. Once cleaved off the polyprotein, is targeted to three destinations: the viral replication cycle, the plasma membrane and the extracellular compartment. Essential for viral replication. Required for formation of the replication complex and recruitment of other non-structural proteins to the ER-derived membrane structures. Excreted as a hexameric lipoparticle that plays a role against host immune response. Antagonizing the complement function. Binds to the host macrophages and dendritic cells. Inhibits signal transduction originating from Toll-like receptor 3 (TLR3). Its function is as follows. Disrupts the host endothelial glycocalyx layer of host pulmonary microvascular endothelial cells, inducing degradation of sialic acid and shedding of heparan sulfate proteoglycans. NS1 induces expression of sialidases, heparanase, and activates cathepsin L, which activates heparanase via enzymatic cleavage. These effects are probably linked to the endothelial hyperpermeability observed in severe dengue disease. Component of the viral RNA replication complex that functions in virion assembly and antagonizes the host immune response. In terms of biological role, required cofactor for the serine protease function of NS3. May have membrane-destabilizing activity and form viroporins. Functionally, displays three enzymatic activities: serine protease, NTPase and RNA helicase. NS3 serine protease, in association with NS2B, performs its autocleavage and cleaves the polyprotein at dibasic sites in the cytoplasm: C-prM, NS2A-NS2B, NS2B-NS3, NS3-NS4A, NS4A-2K and NS4B-NS5. NS3 RNA helicase binds RNA and unwinds dsRNA in the 3' to 5' direction. Its function is as follows. Functions as a signal peptide for NS4B and is required for the interferon antagonism activity of the latter. Induces the formation of ER-derived membrane vesicles where the viral replication takes place. Inhibits interferon (IFN)-induced host STAT1 phosphorylation and nuclear translocation, thereby preventing the establishment of cellular antiviral state by blocking the IFN-alpha/beta pathway. In terms of biological role, replicates the viral (+) and (-) RNA genome, and performs the capping of genomes in the cytoplasm. NS5 methylates viral RNA cap at guanine N-7 and ribose 2'-O positions. Besides its role in RNA genome replication, also prevents the establishment of cellular antiviral state by blocking the interferon-alpha/beta (IFN-alpha/beta) signaling pathway. Inhibits host TYK2 and STAT2 phosphorylation, thereby preventing activation of JAK-STAT signaling pathway. May reduce immune responses by preventing the recruitment of the host PAF1 complex to interferon-responsive genes. In Dengue virus type 4 (strain Dominica/814669/1981) (DENV-4), this protein is Genome polyprotein.